A 100-amino-acid polypeptide reads, in one-letter code: Apolipoprotein C-II (100 aa).

Positions M1–G22 are cleaved as a signal peptide. Residues S66–M74 form a lipid binding region. The tract at residues S78–E100 is lipoprotein lipase cofactor.

The protein belongs to the apolipoprotein C2 family. In terms of processing, proapolipoprotein C-II is synthesized as a sialic acid containing glycoprotein which is subsequently desialylated prior to its proteolytic processing. Proapolipoprotein C-II, the major form found in plasma undergoes proteolytic cleavage of its N-terminal hexapeptide to generate the mature form apolipoprotein C-II, which occurs as the minor form in plasma.

The protein resides in the secreted. Component of chylomicrons, very low-density lipoproteins (VLDL), low-density lipoproteins (LDL), and high-density lipoproteins (HDL) in plasma. Plays an important role in lipoprotein metabolism as an activator of lipoprotein lipase. This is Apolipoprotein C-II (APOC2) from Cricetulus griseus (Chinese hamster).